Consider the following 177-residue polypeptide: Large ribosomal subunit protein uL6 (177 aa).

At K44 the chain carries N6-acetyllysine.

It belongs to the universal ribosomal protein uL6 family. In terms of assembly, part of the 50S ribosomal subunit.

In terms of biological role, this protein binds to the 23S rRNA, and is important in its secondary structure. It is located near the subunit interface in the base of the L7/L12 stalk, and near the tRNA binding site of the peptidyltransferase center. In Escherichia coli O139:H28 (strain E24377A / ETEC), this protein is Large ribosomal subunit protein uL6.